A 352-amino-acid chain; its full sequence is Plant intracellular Ras-group-related LRR protein 1 (352 aa).

The segment at M1–H25 is disordered. 10 LRR repeats span residues K29–L52, G53–R75, L77–L99, S100–C122, A124–L146, H147–M169, A171–L192, L195–L217, A218–T241, and L243–Q263. A GVYW; degenerate motif is present at residues G264–Y271.

Belongs to the SHOC2 family. As to expression, widely expressed but at a lower level in seedlings and stems.

Its function is as follows. Leucine-rich repeat protein that likely mediates protein interactions, possibly in the context of signal transduction. The chain is Plant intracellular Ras-group-related LRR protein 1 (IRL1) from Oryza sativa subsp. japonica (Rice).